We begin with the raw amino-acid sequence, 492 residues long: Peptidyl-prolyl cis-trans isomerase-like 4 (492 aa).

Residues methionine 1 to isoleucine 161 form the PPIase cyclophilin-type domain. The tract at residues aspartate 167 to serine 188 is disordered. The span at arginine 177–aspartate 187 shows a compositional bias: basic and acidic residues. Residue serine 178 is modified to Phosphoserine. Phosphothreonine is present on threonine 182. Residues lysine 201, lysine 212, and lysine 218 each participate in a glycyl lysine isopeptide (Lys-Gly) (interchain with G-Cter in SUMO2) cross-link. An RRM domain is found at asparagine 240 to serine 318. Residues lysine 321 and lysine 362 each participate in a glycyl lysine isopeptide (Lys-Gly) (interchain with G-Cter in SUMO2) cross-link. Disordered regions lie at residues aspartate 368–asparagine 406 and glutamate 423–arginine 492. Residues serine 377–histidine 390 show a composition bias toward basic residues. The residue at position 393 (serine 393) is a Phosphoserine. A Glycyl lysine isopeptide (Lys-Gly) (interchain with G-Cter in SUMO2) cross-link involves residue lysine 405. Residues cysteine 426–histidine 452 are compositionally biased toward basic and acidic residues. Residue lysine 460 forms a Glycyl lysine isopeptide (Lys-Gly) (interchain with G-Cter in SUMO2) linkage. Serine 471 is modified (phosphoserine). Positions lysine 482–arginine 492 are enriched in basic and acidic residues.

Belongs to the cyclophilin-type PPIase family. PPIL4 subfamily. Abundantly expressed in kidney but has a ubiquitously low expression pattern in other adult tissues.

It localises to the nucleus. It carries out the reaction [protein]-peptidylproline (omega=180) = [protein]-peptidylproline (omega=0). Functionally, PPIases accelerate the folding of proteins. It catalyzes the cis-trans isomerization of proline imidic peptide bonds in oligopeptides. The polypeptide is Peptidyl-prolyl cis-trans isomerase-like 4 (PPIL4) (Homo sapiens (Human)).